The sequence spans 1827 residues: Phenolphthiocerol/phthiocerol polyketide synthase subunit C (1827 aa).

One can recognise a Ketosynthase family 3 (KS3) domain in the interval 35–461 (CEPVAVVGIG…GTNAHVVVEQ (427 aa)). Active-site for beta-ketoacyl synthase activity residues include Cys207, His342, and His383. The acyltransferase stretch occupies residues 566 to 876 (VFVYSGQGSQ…LAAVGVAASE (311 aa)). The active-site For malonyltransferase activity is the Ser654. Residues 910-1037 (HPLLGAHIEM…AKVEQSPREC (128 aa)) form an N-terminal hotdog fold region. The tract at residues 910–1076 (HPLLGAHIEM…QHHGPAFAAL (167 aa)) is dehydratase. The PKS/mFAS DH domain occupies 910 to 1198 (HPLLGAHIEM…LRRVERRAVP (289 aa)). His942 (proton acceptor; for dehydratase activity) is an active-site residue. The interval 1050–1198 (GTTVSPADFY…LRRVERRAVP (149 aa)) is C-terminal hotdog fold. Asp1111 serves as the catalytic Proton donor; for dehydratase activity. The tract at residues 1439-1617 (ASYVVTGGLG…VINWGPWSEV (179 aa)) is beta-ketoacyl reductase. Residue 1440 to 1485 (SYVVTGGLGGLGLVVARWLVDRGAGRVVLGGRSDPTDEQCNVLAEL) coordinates NADP(+). Positions 1706 to 1785 (RAVTERMCAR…DLTADLMRQL (80 aa)) constitute a Carrier domain. Position 1745 is an O-(pantetheine 4'-phosphoryl)serine (Ser1745).

NADP(+) is required as a cofactor. The cofactor is pantetheine 4'-phosphate.

The enzyme catalyses icosanoyl-[(phenol)carboxyphthiodiolenone synthase] + 2 (S)-methylmalonyl-CoA + 3 malonyl-CoA + 5 NADPH + 10 H(+) = C32-carboxyphthiodiolenone-[(phenol)carboxyphthiodiolenone synthase] + 5 CO2 + 5 NADP(+) + 5 CoA + 2 H2O. It carries out the reaction docosanoyl-[(phenol)carboxyphthiodiolenone synthase] + 2 (S)-methylmalonyl-CoA + 3 malonyl-CoA + 5 NADPH + 10 H(+) = C34-carboxyphthiodiolenone-[(phenol)carboxyphthiodiolenone synthase] + 5 CO2 + 5 NADP(+) + 5 CoA + 2 H2O. The catalysed reaction is 17-(4-hydroxyphenyl)heptadecanoyl-[(phenol)carboxyphthiodiolenone synthase] + 2 (S)-methylmalonyl-CoA + 3 malonyl-CoA + 5 NADPH + 10 H(+) = C35-(phenol)carboxyphthiodiolenone-[(phenol)carboxyphthiodiolenone synthase] + 5 CO2 + 5 NADP(+) + 5 CoA + 2 H2O. It catalyses the reaction 19-(4-hydroxyphenyl)nonadecanoyl-[(phenol)carboxyphthiodiolenone synthase] + 2 (S)-methylmalonyl-CoA + 3 malonyl-CoA + 5 NADPH + 10 H(+) = C37-(phenol)carboxyphthiodiolenone-[(phenol)carboxyphthiodiolenone synthase] + 5 CO2 + 5 NADP(+) + 5 CoA + 2 H2O. The protein operates within lipid metabolism; fatty acid biosynthesis. Its function is as follows. Part of the PpsABCDE complex involved in the biosynthesis of the lipid core common to phthiocerols and phenolphthiocerols by successive additions of malonyl-CoA or methylmalonyl-CoA extender units. PpsA can accept as substrate the activated forms of either icosanoyl (C20), docosanoyl (C22) or lignoceroyl (C24) groups from FadD26, or a (4-hydroxyphenyl)-C17 or (4-hydroxyphenyl)-C19 fatty acyl from FadD29. PpsA initiates the biosynthesis and extends its substrate using a malonyl-CoA extender unit. The PpsB and PpsC proteins add the second and third malonyl-CoA extender units. PpsD adds an (R)-methylmalonyl unit and PpsE adds a second (R)-methylmalonyl unit. The incorporation of the methylmalonyl units results in formation of two branched methyl groups in the elongated product. This Mycobacterium bovis (strain ATCC BAA-935 / AF2122/97) protein is Phenolphthiocerol/phthiocerol polyketide synthase subunit C (ppsD).